Here is a 193-residue protein sequence, read N- to C-terminus: Segregation and condensation protein B (193 aa).

It belongs to the ScpB family. As to quaternary structure, homodimer. Homodimerization may be required to stabilize the binding of ScpA to the Smc head domains. Component of a cohesin-like complex composed of ScpA, ScpB and the Smc homodimer, in which ScpA and ScpB bind to the head domain of Smc. The presence of the three proteins is required for the association of the complex with DNA.

It is found in the cytoplasm. In terms of biological role, participates in chromosomal partition during cell division. May act via the formation of a condensin-like complex containing Smc and ScpA that pull DNA away from mid-cell into both cell halves. The sequence is that of Segregation and condensation protein B from Clostridium botulinum (strain Kyoto / Type A2).